A 295-amino-acid chain; its full sequence is Pyridoxal 5'-phosphate synthase subunit PdxS (295 aa).

Residue aspartate 25 coordinates D-ribose 5-phosphate. Residue lysine 82 is the Schiff-base intermediate with D-ribose 5-phosphate of the active site. Glycine 154 is a D-ribose 5-phosphate binding site. Arginine 166 lines the D-glyceraldehyde 3-phosphate pocket. D-ribose 5-phosphate contacts are provided by residues glycine 215 and glycine 236–serine 237.

The protein belongs to the PdxS/SNZ family. In the presence of PdxT, forms a dodecamer of heterodimers.

It carries out the reaction aldehydo-D-ribose 5-phosphate + D-glyceraldehyde 3-phosphate + L-glutamine = pyridoxal 5'-phosphate + L-glutamate + phosphate + 3 H2O + H(+). Its pathway is cofactor biosynthesis; pyridoxal 5'-phosphate biosynthesis. In terms of biological role, catalyzes the formation of pyridoxal 5'-phosphate from ribose 5-phosphate (RBP), glyceraldehyde 3-phosphate (G3P) and ammonia. The ammonia is provided by the PdxT subunit. Can also use ribulose 5-phosphate and dihydroxyacetone phosphate as substrates, resulting from enzyme-catalyzed isomerization of RBP and G3P, respectively. This is Pyridoxal 5'-phosphate synthase subunit PdxS from Bacillus cereus (strain B4264).